A 296-amino-acid chain; its full sequence is Probable lipid kinase YegS-like (296 aa).

The region spanning 1 to 130 is the DAGKc domain; that stretch reads MPHTLLILNG…IDLAQVNGEH (130 aa). ATP is bound by residues threonine 37, 63-69, and threonine 92; that span reads GDGTINE. Positions 212, 215, and 217 each coordinate Mg(2+). Glutamate 268 (proton acceptor) is an active-site residue.

The protein belongs to the diacylglycerol/lipid kinase family. YegS lipid kinase subfamily. Requires Mg(2+) as cofactor. Ca(2+) serves as cofactor.

Its subcellular location is the cytoplasm. Its function is as follows. Probably phosphorylates lipids; the in vivo substrate is unknown. The chain is Probable lipid kinase YegS-like from Yersinia pestis bv. Antiqua (strain Angola).